We begin with the raw amino-acid sequence, 372 residues long: MALKFHVIHQSKKSRARVGRIETDHGIIDTPAFVPVATNGALKGVVDHSNIPLMFCNTYHLLVHPGTESIAAMGGLHKFINRDAPIITDSGGFQIFSLAYGSVAEEIKSHGKKKGSSSILEITDEGVWFKSYRDGHKLFLSPEVSVQAQKDLGADIIIPLDELLPFHSDQQYFLSSCSRTYVWEKRSLDYHRNDPRHQSMYGVIHGGIDPEQRKIGCQFVEDHPFDGFAIGGSLGRNLNEMVPVVDITTSHLSKDRPVHLLGIGDLPSIQATVKFGIDSFDSSYPTKAARHGLILSSQGPIKIANQAYANDLSPIDPKCTCLTCSSNLSRAYLRHLFKVHEPNAGIWASIHNLHHMQEVMKNIRKQILNDEI.

The Proton acceptor role is filled by Asp-89. Substrate contacts are provided by residues 89–93 (DSGGF), Asp-161, and Gly-232. Residues 262–268 (GIGDLPS) are RNA binding. The Nucleophile role is filled by Asp-281. Residues 286–290 (TKAAR) form an RNA binding; important for wobble base 34 recognition region. Residues Cys-319, Cys-321, Cys-324, and His-351 each contribute to the Zn(2+) site.

Belongs to the queuine tRNA-ribosyltransferase family. In terms of assembly, homodimer. Within each dimer, one monomer is responsible for RNA recognition and catalysis, while the other monomer binds to the replacement base PreQ1. Zn(2+) serves as cofactor.

The catalysed reaction is 7-aminomethyl-7-carbaguanine + guanosine(34) in tRNA = 7-aminomethyl-7-carbaguanosine(34) in tRNA + guanine. Its pathway is tRNA modification; tRNA-queuosine biosynthesis. Catalyzes the base-exchange of a guanine (G) residue with the queuine precursor 7-aminomethyl-7-deazaguanine (PreQ1) at position 34 (anticodon wobble position) in tRNAs with GU(N) anticodons (tRNA-Asp, -Asn, -His and -Tyr). Catalysis occurs through a double-displacement mechanism. The nucleophile active site attacks the C1' of nucleotide 34 to detach the guanine base from the RNA, forming a covalent enzyme-RNA intermediate. The proton acceptor active site deprotonates the incoming PreQ1, allowing a nucleophilic attack on the C1' of the ribose to form the product. After dissociation, two additional enzymatic reactions on the tRNA convert PreQ1 to queuine (Q), resulting in the hypermodified nucleoside queuosine (7-(((4,5-cis-dihydroxy-2-cyclopenten-1-yl)amino)methyl)-7-deazaguanosine). The sequence is that of Queuine tRNA-ribosyltransferase from Chlamydia felis (strain Fe/C-56) (Chlamydophila felis).